Here is an 88-residue protein sequence, read N- to C-terminus: Small ribosomal subunit protein bS18A (88 aa).

This sequence belongs to the bacterial ribosomal protein bS18 family. As to quaternary structure, part of the 30S ribosomal subunit. Forms a tight heterodimer with protein bS6.

Binds as a heterodimer with protein bS6 to the central domain of the 16S rRNA, where it helps stabilize the platform of the 30S subunit. The sequence is that of Small ribosomal subunit protein bS18A from Mycolicibacterium gilvum (strain PYR-GCK) (Mycobacterium gilvum (strain PYR-GCK)).